We begin with the raw amino-acid sequence, 481 residues long: Chromosomal replication initiator protein DnaA (481 aa).

The interval 1-74 (MSQDLWSFCL…ELGAEFHGAP (74 aa)) is domain I, interacts with DnaA modulators. Residues 74 to 144 (PIEIELVLPA…TASDLAYEKT (71 aa)) are domain II. A disordered region spans residues 101–123 (AGPAPAPTPSQAPAATAAAPAVV). Residues 111 to 123 (QAPAATAAAPAVV) show a composition bias toward low complexity. The domain III, AAA+ region stretch occupies residues 145–361 (RLNADFTFDT…GALNKVVAFA (217 aa)). ATP contacts are provided by Gly189, Gly191, Lys192, and Thr193. Positions 362 to 481 (RFHGRGITLE…VHVLTQVLRG (120 aa)) are domain IV, binds dsDNA.

It belongs to the DnaA family. As to quaternary structure, oligomerizes as a right-handed, spiral filament on DNA at oriC.

The protein localises to the cytoplasm. Functionally, plays an essential role in the initiation and regulation of chromosomal replication. ATP-DnaA binds to the origin of replication (oriC) to initiate formation of the DNA replication initiation complex once per cell cycle. Binds the DnaA box (a 9 base pair repeat at the origin) and separates the double-stranded (ds)DNA. Forms a right-handed helical filament on oriC DNA; dsDNA binds to the exterior of the filament while single-stranded (ss)DNA is stabiized in the filament's interior. The ATP-DnaA-oriC complex binds and stabilizes one strand of the AT-rich DNA unwinding element (DUE), permitting loading of DNA polymerase. After initiation quickly degrades to an ADP-DnaA complex that is not apt for DNA replication. Binds acidic phospholipids. The protein is Chromosomal replication initiator protein DnaA of Aromatoleum aromaticum (strain DSM 19018 / LMG 30748 / EbN1) (Azoarcus sp. (strain EbN1)).